Here is a 389-residue protein sequence, read N- to C-terminus: Probable acyl-CoA dehydrogenase fadE25 (389 aa).

The protein belongs to the acyl-CoA dehydrogenase family. FAD serves as cofactor.

It carries out the reaction a 2,3-saturated acyl-CoA + A = a 2,3-dehydroacyl-CoA + AH2. In Mycobacterium bovis (strain ATCC BAA-935 / AF2122/97), this protein is Probable acyl-CoA dehydrogenase fadE25 (fadE25).